The primary structure comprises 634 residues: DNA-directed RNA polymerase subunit gamma (634 aa).

Residues Cys74, Cys76, Cys89, and Cys92 each contribute to the Zn(2+) site. 3 residues coordinate Mg(2+): Asp471, Asp473, and Asp475.

This sequence belongs to the RNA polymerase beta' chain family. RpoC1 subfamily. In terms of assembly, in cyanobacteria the RNAP catalytic core is composed of 2 alpha, 1 beta, 1 beta', 1 gamma and 1 omega subunit. When a sigma factor is associated with the core the holoenzyme is formed, which can initiate transcription. The cofactor is Mg(2+). Zn(2+) is required as a cofactor.

The enzyme catalyses RNA(n) + a ribonucleoside 5'-triphosphate = RNA(n+1) + diphosphate. DNA-dependent RNA polymerase catalyzes the transcription of DNA into RNA using the four ribonucleoside triphosphates as substrates. The polypeptide is DNA-directed RNA polymerase subunit gamma (Synechococcus sp. (strain CC9902)).